Here is a 299-residue protein sequence, read N- to C-terminus: Mitochondrial 2-oxodicarboxylate carrier (299 aa).

3 Solcar repeats span residues 11–100, 107–196, and 205–294; these read NEAS…YKKL, SPAL…VKNI, and LEFL…TYSW. The next 6 helical transmembrane spans lie at 17-37, 62-82, 100-120, 179-199, 211-231, and 274-290; these read ILAGGSAGLVEICLMHPLDVV, MIFRTEGLFGFYKGILPPILA, LLGYVSLSPALTFAVAGLGSG, HGVFNMVYFGFYFNVKNIIPV, FGIGLLSGTIASVINIPFDVA, and IMRLGPGGAVMLLVYEY.

This sequence belongs to the mitochondrial carrier (TC 2.A.29) family.

The protein resides in the mitochondrion inner membrane. The catalysed reaction is 2-oxoadipate(in) + 2-oxoglutarate(out) = 2-oxoadipate(out) + 2-oxoglutarate(in). It carries out the reaction hexanedioate(in) + 2-oxoglutarate(out) = hexanedioate(out) + 2-oxoglutarate(in). The enzyme catalyses L-2-aminoadipate(in) + 2-oxoglutarate(out) = L-2-aminoadipate(out) + 2-oxoglutarate(in). It catalyses the reaction glutarate(in) + 2-oxoglutarate(out) = glutarate(out) + 2-oxoglutarate(in). The catalysed reaction is 2-oxoheptanedioate(in) + 2-oxoglutarate(out) = 2-oxoheptanedioate(out) + 2-oxoglutarate(in). It carries out the reaction heptanedioate(in) + 2-oxoglutarate(out) = heptanedioate(out) + 2-oxoglutarate(in). The enzyme catalyses citrate(in) + 2-oxoglutarate(out) = citrate(out) + 2-oxoglutarate(in). Functionally, transports dicarboxylates across the inner membranes of mitochondria by a counter-exchange mechanism. Can transport 2-oxoadipate (2-oxohexanedioate), 2-oxoglutarate, adipate (hexanedioate), glutarate, and to a lesser extent, pimelate (heptanedioate), 2-oxopimelate (2-oxoheptanedioate), 2-aminoadipate (2-aminohexanedioate), oxaloacetate, and citrate. Plays a central role in catabolism of lysine, hydroxylysine, and tryptophan, by transporting common metabolite intermediates (such as 2-oxoadipate) into the mitochondria, where it is converted into acetyl-CoA and can enter the citric acid (TCA) cycle. This Bos taurus (Bovine) protein is Mitochondrial 2-oxodicarboxylate carrier (SLC25A21).